Reading from the N-terminus, the 150-residue chain is Large ribosomal subunit protein bL9 (150 aa).

Belongs to the bacterial ribosomal protein bL9 family.

Binds to the 23S rRNA. The sequence is that of Large ribosomal subunit protein bL9 from Streptococcus pyogenes serotype M2 (strain MGAS10270).